Reading from the N-terminus, the 319-residue chain is Class I histocompatibility antigen, Non-RT1.A alpha-1 chain (319 aa).

The first 24 residues, 1–24, serve as a signal peptide directing secretion; the sequence is MGAMAPRTLLLLLAAVLAPTQTWA. Residues 25–114 form an alpha-1 region; the sequence is GSHSLRYFHT…LLSYYNQSEG (90 aa). The Extracellular segment spans residues 25–307; it reads GSHSLRYFHT…WEPSPSTDSN (283 aa). An N-linked (GlcNAc...) asparagine glycan is attached at Asn110. The alpha-2 stretch occupies residues 115-206; that stretch reads GSHTIQRMYG…ERGKETLLRS (92 aa). Disulfide bonds link Cys125-Cys188 and Cys227-Cys283. The segment at 207–298 is alpha-3; sequence DPPEAHVTLH…GLPEPLSQRW (92 aa). One can recognise an Ig-like C1-type domain in the interval 209–295; that stretch reads PEAHVTLHPR…EHEGLPEPLS (87 aa). Asn280 is a glycosylation site (N-linked (GlcNAc...) asparagine). Positions 299-307 are connecting peptide; it reads EPSPSTDSN. A helical membrane pass occupies residues 308–319; that stretch reads LLLLFLELWQFL.

Belongs to the MHC class I family. As to quaternary structure, heterodimer of an alpha chain and a beta chain (beta-2-microglobulin).

It is found in the membrane. Its function is as follows. Involved in the presentation of foreign antigens to the immune system. This is Class I histocompatibility antigen, Non-RT1.A alpha-1 chain (RT1-Aw2) from Rattus norvegicus (Rat).